The chain runs to 213 residues: High frequency lysogenization protein HflD homolog (213 aa).

Positions 79 to 122 form a coiled coil; it reads QGLNAELTRYTLSLMVLERKLSSAKGALNTLGDRINGLQRQLDH.

It belongs to the HflD family.

The protein resides in the cytoplasm. It localises to the cell inner membrane. In Salmonella typhi, this protein is High frequency lysogenization protein HflD homolog.